Consider the following 839-residue polypeptide: Protein translocase subunit SecA (839 aa).

ATP is bound by residues Gln85, 103–107, and Asp493; that span reads GEGKT. Residues 780–790 show a composition bias toward basic and acidic residues; it reads QIHEQERERAS. Residues 780–839 are disordered; it reads QIHEQERERASQRATTAAPQNIQSQQSANTDDLPKVERNEACPCGSGKKFKNCHGRKSFS. The segment covering 791–809 has biased composition (polar residues); it reads QRATTAAPQNIQSQQSANT. Residues Cys821, Cys823, Cys832, and His833 each coordinate Zn(2+). Positions 827–839 are enriched in basic residues; that stretch reads KKFKNCHGRKSFS.

Belongs to the SecA family. In terms of assembly, monomer and homodimer. Part of the essential Sec protein translocation apparatus which comprises SecA, SecYEG and auxiliary proteins SecDF. Other proteins may also be involved. Zn(2+) is required as a cofactor.

The protein localises to the cell membrane. The protein resides in the cytoplasm. It carries out the reaction ATP + H2O + cellular proteinSide 1 = ADP + phosphate + cellular proteinSide 2.. Part of the Sec protein translocase complex. Interacts with the SecYEG preprotein conducting channel. Has a central role in coupling the hydrolysis of ATP to the transfer of proteins into and across the cell membrane, serving as an ATP-driven molecular motor driving the stepwise translocation of polypeptide chains across the membrane. The polypeptide is Protein translocase subunit SecA (Streptococcus pyogenes serotype M1).